The chain runs to 416 residues: MSSDAQEASDDRRKYEFRKVIEELRDFEGSGTQLVTIYIPEDRQVSDVVAHVTQEHSEASNIKSKQTRTAVQDALTSIKDRLRYYDTFPPENGMVIFSGAIDAGGGQTDMVTRTLESPPQPVESFRYHCDSAFLTEPLEHMLEDSGLFGLIVLDRREANVGWLKGKRVEPVKSASSLVPGKQRKGGQSAQRFARLRLEAIDNFYQEVAGMADDLFVDKRHELDGILVGGPSPTKDEFLDGDYLHHELQDKVLGKFDVAYTDESGLKDLVDNASEALADQEIVEDKRHMDEFFENLHTGEEATYGFDQTRRNLIMGSVDRLLISEDLRSDVVVYECPNGHEEYEVVDSRHSTPSHECSECGEEADVDEREDVIEHLMSIAEQRGTDTKFISTDFEKGEQLLDAFGGIAGILRYSTGV.

Belongs to the eukaryotic release factor 1 family. In terms of assembly, heterodimer of two subunits, one of which binds GTP.

It localises to the cytoplasm. In terms of biological role, directs the termination of nascent peptide synthesis (translation) in response to the termination codons UAA, UAG and UGA. This Halorubrum lacusprofundi (strain ATCC 49239 / DSM 5036 / JCM 8891 / ACAM 34) protein is Peptide chain release factor subunit 1.